Here is a 1052-residue protein sequence, read N- to C-terminus: MAGMDSGNLKTARLWRDAALRARKLRSNLRQLTLTAAGACPGAGADALESPASPQLVLPANLGDIEALNLGNNGLEEVPEGLGSALGSLRVLVLRRNRFARLPPAVAELGHHLTELDVSHNRLTALGAEVVSALRELRKLNLSHNQLPALPAQLGALAHLEELDVSFNRLAHLPDSLSCLSRLRTLDVDHNQLTAFPRQLLQLVALEELDVSSNRLRGLPEDISALRALKILWLSGAELGTLPAGFCELASLESLMLDNNGLQALPAQFSCLQRLKMLNLSSNLFEEFPAALLPLAGLEELYLSRNQLTSVPSLISGLGRLLTLWLDNNRIRYLPDSIVELTGLEELVLQGNQIAVLPDHFGQLSRVGLWKIKDNPLIQPPYEVCMKGIPYIAAYQKELAHSQPAVQPRLKLLLMGHKAAGKTLLRHCLTEERVEGCPGGGDKEKCYPPSPPPVSKGIEVTSWTADASRGLRFIVYDLAGDESYEVIQPFFLSPGALYVLVVNLATYEPRHFPTTVGSFLHRVGARVPHAVVCIVGTHADLCGERELEEKCLDIHRQIALQEKHDAEGLSRLAKVVDEALARDFELRSASPHAAYYGVSDKNLRRRKAHFQYLLNHRLQILSPVLPVSCRDPRHLRRLRDKLLSVAEHREIFPNLHRVLPRSWQVLEELHFQPPQAQRLWLSWWDSARLGLQAGLTEDRLQSALSYLHESGKLLYFEDSPALKEHVFHNLTRLIDILNVFFQRDPSLLLHKLLLGTSGEGKAEGESSPPMARSTPSQELLRATQLHQYVEGFLLHGLLPAHVIRLLLKPHVQAQQDLQLLLELLEKMGLCYCLNKPKGKPLNGSTAWYKFPCYVQNEVPHAEAWINGTNLAGQSFVAEQLQIEYSFPFTFPLGLFARYSVQINSHVVHRSDGKFQIFAYRGKVPVVVSYRPARGVLQPDTLSIASHASLPNIWTAWQAITPLVEELNVLLQEWPGLHYTVHILCSKCLKRGSPNPHAFPGELLSQPRPEGVAEIICPKNGSERVNVALVYPPTPTVISPCSKKNVGEKHRNQ.

N-acetylalanine is present on A2. LRR repeat units follow at residues 64-85 (DIEA…LGSA), 88-109 (SLRV…VAEL), 112-133 (HLTE…VVSA), 136-157 (ELRK…LGAL), 159-180 (HLEE…LSCL), 182-203 (RLRT…LLQL), 205-226 (ALEE…ISAL), 228-249 (ALKI…FCEL), 251-272 (SLES…FSCL), 274-296 (RLKM…LPLA), 297-318 (GLEE…ISGL), 320-341 (RLLT…IVEL), and 343-364 (GLEE…FGQL). The segment at 64–364 (DIEALNLGNN…AVLPDHFGQL (301 aa)) is required for interaction with PJA2. Residues 64–649 (DIEALNLGNN…DKLLSVAEHR (586 aa)) form a required for interaction with PPP2R2A region. Residues 403-649 (QPAVQPRLKL…DKLLSVAEHR (247 aa)) enclose the Roc domain. An N6-acetyllysine modification is found at K601.

As to quaternary structure, interacts with RAF1. Interacts with HSPD1. Interacts with PPP2CA; retains PPP2CA into the cytoplasm and excludes it from the nucleus. Interacts with PPP2R2A; the interaction is direct. Interacts with PJA2. Ubiquitinated. Ubiquitination by PJA2 does not lead MFHAS1 to proteasomal degradation but positively regulates its function in polarization of macrophages. In terms of tissue distribution, ubiquitously expressed. Overexpressed in malignant fibrous histiocytomas. Expressed in red blood cells (at protein level).

The protein localises to the cytoplasm. Probable GTP-binding protein. Functions in innate immunity and more specifically the inflammatory response as a regulator of the Toll-like receptor TLR2 and TLR4 signaling pathways. Negatively regulates the part of the TLR4 signaling pathway that leads to the activation of the transcription factor AP-1. By retaining the phosphatase complex PP2A into the cytoplasm, prevents the dephosphorylation of the AP-1 subunit JUN which is required for proper activation of the transcription factor. Both inhibits and activates the TLR2-dependent signaling pathway. Positively regulates the TLR2 signaling pathway to activate specifically the downstream p38 and JNK MAP kinases and promote the polarization of macrophages toward the pro-inflammatory M1 phenotype. It may also play a role in the regulation of inflammation induced by high glucose through the PKB/AKT signaling pathway. Also involved in erythrocyte differentiation through activation of the ERK1/ERK2 signaling pathway. This Homo sapiens (Human) protein is Malignant fibrous histiocytoma-amplified sequence 1.